Here is a 271-residue protein sequence, read N- to C-terminus: Centromere protein K (271 aa).

Coiled-coil stretches lie at residues 11–44 (DTITDVEAVIDTEEELIKECEEMWKDMEDCQNKL) and 102–151 (LRCD…VENQ).

Belongs to the CENP-K/MCM22 family. Component of the CENPA-CAD complex, composed of CENPI, CENPK, CENPL, CENPO, CENPP, CENPQ, CENPR and CENPS. The CENPA-CAD complex interacts with the CENPA-NAC complex, at least composed of CENPA, CENPC, CENPH, CENPM, CENPN, CENPT and CENPU. May interact with Sox6. In terms of tissue distribution, highly expressed in testis.

Its subcellular location is the nucleus. The protein localises to the chromosome. The protein resides in the centromere. It is found in the kinetochore. Component of the CENPA-CAD (nucleosome distal) complex, a complex recruited to centromeres which is involved in assembly of kinetochore proteins, mitotic progression and chromosome segregation. May be involved in incorporation of newly synthesized CENPA into centromeres via its interaction with the CENPA-NAC complex. Acts in coordination with KNL1 to recruit the NDC80 complex to the outer kinetochore. This chain is Centromere protein K (Cenpk), found in Mus musculus (Mouse).